The following is a 372-amino-acid chain: Putative RING-H2 finger protein ATL21A (372 aa).

The N-terminal stretch at 1–20 is a signal peptide; the sequence is MTFSKQLFLYLFFLFPLLHA. The helical transmembrane segment at 242–262 threads the bilayer; the sequence is IILLSIIGPLTIFATCIAVGV. An RING-type; atypical zinc finger spans residues 320 to 362; sequence CPICLSEYASKETVRCIPECDHCFHSECIDVWLKIHGSCPLCR.

The protein belongs to the RING-type zinc finger family. ATL subfamily.

The protein resides in the membrane. The enzyme catalyses S-ubiquitinyl-[E2 ubiquitin-conjugating enzyme]-L-cysteine + [acceptor protein]-L-lysine = [E2 ubiquitin-conjugating enzyme]-L-cysteine + N(6)-ubiquitinyl-[acceptor protein]-L-lysine.. It functions in the pathway protein modification; protein ubiquitination. This chain is Putative RING-H2 finger protein ATL21A (ATL21A), found in Arabidopsis thaliana (Mouse-ear cress).